We begin with the raw amino-acid sequence, 274 residues long: tRNA (mnm(5)s(2)U34)-methyltransferase, chloroplastic (274 aa).

Residues 1–50 (MAAGFFQAEMSILSSTLARSYSLPIRKTLMTFDFRIAMQRNPCLRIRRSC) constitute a chloroplast transit peptide. Residues asparagine 108, asparagine 110, aspartate 134, glutamine 136, and histidine 166 each coordinate S-adenosyl-L-methionine.

This sequence belongs to the methyltransferase superfamily. MnmM family.

The protein resides in the plastid. Its subcellular location is the chloroplast. It carries out the reaction 5-aminomethyl-2-thiouridine(34) in tRNA + S-adenosyl-L-methionine = 5-methylaminomethyl-2-thiouridine(34) in tRNA + S-adenosyl-L-homocysteine + H(+). It functions in the pathway tRNA modification. In terms of biological role, involved in the biosynthesis of 5-methylaminomethyl-2-thiouridine (mnm(5)s(2)U) at the wobble position (U34) in tRNA. Catalyzes the transfer of a methyl group from S-adenosyl-L-methionine to nm(5)s(2)U34 to form mnm(5)s(2)U34. The polypeptide is tRNA (mnm(5)s(2)U34)-methyltransferase, chloroplastic (Arabidopsis thaliana (Mouse-ear cress)).